Here is a 148-residue protein sequence, read N- to C-terminus: Transcription antitermination protein NusB (148 aa).

This sequence belongs to the NusB family.

Involved in transcription antitermination. Required for transcription of ribosomal RNA (rRNA) genes. Binds specifically to the boxA antiterminator sequence of the ribosomal RNA (rrn) operons. The sequence is that of Transcription antitermination protein NusB from Saccharopolyspora erythraea (strain ATCC 11635 / DSM 40517 / JCM 4748 / NBRC 13426 / NCIMB 8594 / NRRL 2338).